The following is a 190-amino-acid chain: RNA pyrophosphohydrolase (190 aa).

Positions 6 to 149 (GYRPNVGIVL…KRSVYARALC (144 aa)) constitute a Nudix hydrolase domain. The Nudix box motif lies at 38 to 59 (GGMHSDETPVEAMYRELNEETG).

The protein belongs to the Nudix hydrolase family. RppH subfamily. It depends on a divalent metal cation as a cofactor.

Accelerates the degradation of transcripts by removing pyrophosphate from the 5'-end of triphosphorylated RNA, leading to a more labile monophosphorylated state that can stimulate subsequent ribonuclease cleavage. The sequence is that of RNA pyrophosphohydrolase from Xylella fastidiosa (strain Temecula1 / ATCC 700964).